The chain runs to 130 residues: MAQIKYYATGRRKTSVAKVWLSPGNGKIIVNDKNMEEYFPLETLRIIVKQPLTLTETLGKYDVIAKVKGGGLSGQAGAVRHGIARALVLADPTLRPVLKKAGFLTRDPRMVERKKYGLKKARRAPQFSKR.

This sequence belongs to the universal ribosomal protein uS9 family.

The chain is Small ribosomal subunit protein uS9 from Caldicellulosiruptor bescii (strain ATCC BAA-1888 / DSM 6725 / KCTC 15123 / Z-1320) (Anaerocellum thermophilum).